The following is a 250-amino-acid chain: Aquaporin (250 aa).

Residues 1–15 are Cytoplasmic-facing; sequence MTRETLKTLQSTFGE. A helical membrane pass occupies residues 16-36; that stretch reads MVASFVFGFAVYSALLGSALT. Residues 37 to 42 lie on the Extracellular side of the membrane; that stretch reads EQSAAR. Residues 43–63 traverse the membrane as a helical segment; that stretch reads VIVGLTVGFSGICVIYSFCDV. Over 64–86 the chain is Cytoplasmic; sequence TVAHFNPAITLAAILTCKLGVLR. Positions 69-71 match the NPA motif; it reads NPA. The helical transmembrane segment at 87 to 107 threads the bilayer; that stretch reads GIGYIVAQYIGFILAVCALLP. At 108–133 the chain is on the extracellular side; the sequence is CSPVGYKETLNIIRPTPSPFGGDNLN. Residues 134–154 form a helical membrane-spanning segment; sequence VFFTEFFLTAILVHVAFATAV. At 155–179 the chain is on the cytoplasmic side; the sequence is NPYKPKTDTEGKFVDPDEEEPVDRR. A helical membrane pass occupies residues 180–200; the sequence is ITAPLCIGLTLGFLAFLGLAS. Residues 201–224 are Extracellular-facing; that stretch reads SGGAFNPGLTLAPVIMSNTWNHFW. Residues 206 to 208 carry the NPG motif; that stretch reads NPG. A helical transmembrane segment spans residues 225–245; sequence AYFAGQYLGGFVGGLLQVLVL. Residues 246-250 are Cytoplasmic-facing; sequence YKLSF.

Belongs to the MIP/aquaporin (TC 1.A.8) family.

The protein localises to the cell membrane. Water channel required to facilitate the transport of water across membranes. Involved in osmotolerance. This chain is Aquaporin (AQP), found in Encephalitozoon cuniculi (strain GB-M1) (Microsporidian parasite).